Reading from the N-terminus, the 277-residue chain is DNA-binding transcriptional activator MhpR (277 aa).

An HTH iclR-type domain is found at valine 12–isoleucine 74. A DNA-binding region (H-T-H motif) is located at residues valine 34–glutamate 53. Residues isoleucine 89–serine 262 enclose the IclR-ED domain.

In terms of biological role, activator of the mhpABCDFE operon coding for components of the 3-hydroxyphenylpropionate degradation pathway. This Escherichia coli (strain K12) protein is DNA-binding transcriptional activator MhpR (mhpR).